The following is a 192-amino-acid chain: Large ribosomal subunit protein bL9 (192 aa).

Positions 172–192 are disordered; the sequence is DALRPEDFFDPEADGVDEDEA. Over residues 179–192 the composition is skewed to acidic residues; the sequence is FFDPEADGVDEDEA.

It belongs to the bacterial ribosomal protein bL9 family.

In terms of biological role, binds to the 23S rRNA. The sequence is that of Large ribosomal subunit protein bL9 from Rhizobium johnstonii (strain DSM 114642 / LMG 32736 / 3841) (Rhizobium leguminosarum bv. viciae).